We begin with the raw amino-acid sequence, 616 residues long: Replication protein A 70 kDa DNA-binding subunit (616 aa).

Residue Met-1 is modified to N-acetylmethionine. Residues Lys-22 and Lys-88 each participate in a glycyl lysine isopeptide (Lys-Gly) (interchain with G-Cter in ubiquitin) cross-link. The tract at residues 121–154 (GLGQPQVAPPAPAASPAASSRPQPQNGSSGMGST) is disordered. Low complexity predominate over residues 134-145 (ASPAASSRPQPQ). N6-acetyllysine; alternate occurs at positions 163 and 167. Glycyl lysine isopeptide (Lys-Gly) (interchain with G-Cter in ubiquitin); alternate cross-links involve residues Lys-163 and Lys-167. Thr-180 is subject to Phosphothreonine. Lys-183 is covalently cross-linked (Glycyl lysine isopeptide (Lys-Gly) (interchain with G-Cter in ubiquitin)). The residue at position 191 (Thr-191) is a Phosphothreonine. Residues 197–281 (WTICARVTNK…VKNDYEMTFN (85 aa)) constitute a DNA-binding region (OB). Glycyl lysine isopeptide (Lys-Gly) (interchain with G-Cter in ubiquitin) cross-links involve residues Lys-220 and Lys-244. Position 259 is an N6-acetyllysine; alternate (Lys-259). Lys-259 is covalently cross-linked (Glycyl lysine isopeptide (Lys-Gly) (interchain with G-Cter in ubiquitin); alternate). Glycyl lysine isopeptide (Lys-Gly) (interchain with G-Cter in ubiquitin) cross-links involve residues Lys-267 and Lys-331. Ser-384 carries the phosphoserine modification. Residues Lys-410 and Lys-431 each participate in a glycyl lysine isopeptide (Lys-Gly) (interchain with G-Cter in ubiquitin) cross-link. Lys-449 is covalently cross-linked (Glycyl lysine isopeptide (Lys-Gly) (interchain with G-Cter in SUMO)). Lys-458 is covalently cross-linked (Glycyl lysine isopeptide (Lys-Gly) (interchain with G-Cter in ubiquitin)). A C4-type zinc finger spans residues 481–503 (CPTQDCNKKVIDQQNGLYRCEKC). A Glycyl lysine isopeptide (Lys-Gly) (interchain with G-Cter in ubiquitin) cross-link involves residue Lys-553. A Glycyl lysine isopeptide (Lys-Gly) (interchain with G-Cter in SUMO) cross-link involves residue Lys-577.

This sequence belongs to the replication factor A protein 1 family. Component of the canonical replication protein A complex (RPA), a heterotrimer composed of RPA1, RPA2 and RPA3. Also a component of the aRPA, the alternative replication protein A complex, a trimeric complex similar to the replication protein A complex/RPA but where RPA1 and RPA3 are associated with RPA4 instead of RPA2. The DNA-binding activity may reside exclusively on the RPA1 subunit. Interacts with PRPF19; the PRP19-CDC5L complex is recruited to the sites of DNA repair where it ubiquitinates the replication protein A complex (RPA). Interacts with RIPK1. Interacts with the polymerase alpha subunit POLA1/p180; this interaction stabilizes the replicative complex and reduces the misincorporation rate of DNA polymerase alpha by acting as a fidelity clamp. Interacts with RAD51 and SENP6 to regulate DNA repair. Interacts with HELB; this interaction promotes HELB recruitment to chromatin following DNA damage. Interacts with PRIMPOL; leading to recruit PRIMPOL on chromatin and stimulate its DNA primase activity. Interacts with XPA; the interaction is direct and associates XPA with the RPA complex. Interacts with ETAA1; the interaction is direct and promotes ETAA1 recruitment at stalled replication forks. Interacts with RPA1; this interaction associates HROB with the RPA complex. Interacts (when poly-ADP-ribosylated) with HTATSF1. Interacts with BRIP1/FANCJ via this RPA1 subunit; following DNA damage they colocalize in foci in the nucleus. DNA damage-induced 'Lys-63'-linked polyubiquitination by PRPF19 mediates ATRIP recruitment to the RPA complex at sites of DNA damage and activation of ATR. Ubiquitinated by RFWD3 at stalled replication forks in response to DNA damage: ubiquitination by RFWD3 does not lead to degradation by the proteasome and promotes removal of the RPA complex from stalled replication forks, promoting homologous recombination. In terms of processing, sumoylated on lysine residues Lys-449 and Lys-577, with Lys-449 being the major site. Sumoylation promotes recruitment of RAD51 to the DNA damage foci to initiate DNA repair through homologous recombination. Desumoylated by SENP6. Post-translationally, poly-ADP-ribosylated by PARP1; promoting recruitment of HTATSF1.

Its subcellular location is the nucleus. The protein localises to the PML body. Functionally, as part of the heterotrimeric replication protein A complex (RPA/RP-A), binds and stabilizes single-stranded DNA intermediates that form during DNA replication or upon DNA stress. It prevents their reannealing and in parallel, recruits and activates different proteins and complexes involved in DNA metabolism. Thereby, it plays an essential role both in DNA replication and the cellular response to DNA damage. In the cellular response to DNA damage, the RPA complex controls DNA repair and DNA damage checkpoint activation. Through recruitment of ATRIP activates the ATR kinase a master regulator of the DNA damage response. It is required for the recruitment of the DNA double-strand break repair factors RAD51 and RAD52 to chromatin in response to DNA damage. Also recruits to sites of DNA damage proteins like XPA and XPG that are involved in nucleotide excision repair and is required for this mechanism of DNA repair. Also plays a role in base excision repair (BER) probably through interaction with UNG. Also recruits SMARCAL1/HARP, which is involved in replication fork restart, to sites of DNA damage. Plays a role in telomere maintenance. As part of the alternative replication protein A complex, aRPA, binds single-stranded DNA and probably plays a role in DNA repair. Compared to the RPA2-containing, canonical RPA complex, may not support chromosomal DNA replication and cell cycle progression through S-phase. The aRPA may not promote efficient priming by DNA polymerase alpha but could support DNA synthesis by polymerase delta in presence of PCNA and replication factor C (RFC), the dual incision/excision reaction of nucleotide excision repair and RAD51-dependent strand exchange. RPA stimulates 5'-3' helicase activity of the BRIP1/FANCJ. The polypeptide is Replication protein A 70 kDa DNA-binding subunit (RPA1) (Homo sapiens (Human)).